Here is a 382-residue protein sequence, read N- to C-terminus: 3-ketosteroid-9-alpha-monooxygenase, oxygenase component (382 aa).

A Rieske domain is found at Trp20–Val122. Residues Cys61, His63, Cys80, and His83 each contribute to the [2Fe-2S] cluster site. The Fe cation site is built by Asn169, His175, His180, and Asp298.

As to quaternary structure, homotrimer. The two-component system 3-ketosteroid-9-alpha-monooxygenase is composed of an oxygenase component KshA and a reductase component KshB. [2Fe-2S] cluster serves as cofactor. The cofactor is Fe cation.

It catalyses the reaction androsta-1,4-diene-3,17-dione + 2 reduced [2Fe-2S]-[ferredoxin] + O2 + 2 H(+) = 9alpha-hydroxyandrosta-1,4-diene-3,17-dione + 2 oxidized [2Fe-2S]-[ferredoxin] + H2O. In vitro, catalyzes the introduction of a 9alpha-hydroxyl moiety into the ring B of 3-ketosteroid substrates such as 1,4-androstadiene-3,17-dione (ADD), 4-androstene-3,17-dione (AD), 4-androstene-17beta-ol-3-one (testosterone), 4-pregnene-3,20-dione (progesterone), 23,24-bisnorcholesta-4-ene-22-oate and 23,24-bisnorcholesta-1,4-diene-22-oate. This is 3-ketosteroid-9-alpha-monooxygenase, oxygenase component from Rhodococcus rhodochrous.